The primary structure comprises 1320 residues: MGTTTMGVKLDDATRERIKMAASRIDRTPHWLIKQAIFSYLDKLENSDTLPELPALFVGAANESEEPVAPQDEPHQPFLEFAEQILPQSVSRAAITAAWRRPETDAVSMLMEQARLSPPVAEQAHKLAYQLAEKLRNQKSASGRAGMVQGLLQEFSLSSQEGVALMCLAEALLRIPDKATRDALIRDKISNGNWQSHIGRSPSLFVNAATWGLLFTGRLVSTHNEANLSRSLNRIIGKSGEPLIRKGVDMAMRLMGEQFVTGETIAQALANARKLEEKGFRYSYDMLGEAALTAADAQAYMVSYQQAIHAIGKASNGRGIYEGPGISIKLSALHPRYSRAQYDRVMEELYPRLKSLTLLARQYDIGLNIDAEEADRLEISLDLLEKLCFEPELAGWNGIGFVIQAYQKRCPLVIDYLVDLASRSRRRLMIRLVKGAYWDSEIKRAQMEGLEGYPVYTRKVYTDVSYLACAKKLLAVPNLIYPQFATHNAHTLAAIYHLAGQNYYPGQYEFQCLHGMGEPLYEQVTGKVADGKLNRPCRIYAPVGTHETLLAYLVRRLLENGANTSFVNRIADATLPLDELVADPVEAVEKLAQQEGQAGIPHPKIPLPRDLYGEGRINSAGLDLANEHRLASLSSALLSNAMQKWQAKPVLEQPVADGEMTPVINPAEPKDIVGWGREATESEVEQALQNAVNQAPVWFATPPQERAAILQRAAVLMEDQMQQLIGLLVREAGKTFSNAIAEVREAVDFLHYYAGQVRDDFDNETHRPLGPVVCISPWNFPLAIFTGQIAAALAAGNSVLAKPAEQTSLIAAQGIAILLEAGVPPGVVQLLPGRGETVGAQLTADARVRGVMFTGSTEVATLLQRNIATRLDAQGRPIPLIAETGGMNAMIVDSSALTEQVVVDVLASAFDSAGQRCSALRVLCLQDDIAEHTLKMLRGAMAECRMGNPGRLTTDIGPVIDSEAKANIERHIQTMRAKGRPVFQAARENSDDAQEWQTGTFVMPTLIELENFAELEKEVFGPVLHVVRYNRNQLAELIEQINASGYGLTLGVHTRIDETIAQVTGSAHVGNLYVNRNMVGAVVGVQPFGGEGLSGTGPKAGGPLYLYRLLAHRPPNALNTTLTRQDARYPVDAQLKTTLLAPLTALTQWAADRPALQTLCRQFADLAQAGTQRLLPGPTGERNTWTLLPRERVLCLADDEQDALTQLAAVLAVGSQALWSDDAFHRDLAKRLPAAVAARVQFAKAETLMAQPFDAVIFHGDSDKLRTVCEAVAAREGAIVSVQGFARGESNILLERLYIERSLSVNTAAAGGNASLMTIG.

The segment at 228–574 (LSRSLNRIIG…SFVNRIADAT (347 aa)) is proline dehydrogenase. The segment at 653–1119 (QPVADGEMTP…LAHRPPNALN (467 aa)) is aldehyde dehydrogenase. Residues glutamate 883 and cysteine 917 contribute to the active site.

This sequence in the N-terminal section; belongs to the proline dehydrogenase family. The protein in the C-terminal section; belongs to the aldehyde dehydrogenase family. It depends on FAD as a cofactor.

It catalyses the reaction L-proline + a quinone = (S)-1-pyrroline-5-carboxylate + a quinol + H(+). It carries out the reaction L-glutamate 5-semialdehyde + NAD(+) + H2O = L-glutamate + NADH + 2 H(+). It participates in amino-acid degradation; L-proline degradation into L-glutamate; L-glutamate from L-proline: step 1/2. It functions in the pathway amino-acid degradation; L-proline degradation into L-glutamate; L-glutamate from L-proline: step 2/2. Functionally, oxidizes proline to glutamate for use as a carbon and nitrogen source and also function as a transcriptional repressor of the put operon. The chain is Bifunctional protein PutA (putA) from Salmonella typhimurium (strain LT2 / SGSC1412 / ATCC 700720).